A 174-amino-acid chain; its full sequence is FMN reductase (NADH) SmoA (174 aa).

This sequence belongs to the non-flavoprotein flavin reductase family.

The enzyme catalyses FMNH2 + NAD(+) = FMN + NADH + 2 H(+). In terms of biological role, part of the sulfoquinovose monooxygenase (sulfo-SMO) pathway, a D-sulfoquinovose degradation pathway that enables the complete utilization of all carbons within sulfoquinovose (SQ) with concomitant production of inorganic sulfite. Catalyzes the NADH-dependent reduction of FMN. FMNH(2) is then transferred to the sulfoquinovose monooxygenase SmoC. The polypeptide is FMN reductase (NADH) SmoA (Agrobacterium fabrum (strain C58 / ATCC 33970) (Agrobacterium tumefaciens (strain C58))).